Consider the following 122-residue polypeptide: Large ribosomal subunit protein uL14 (122 aa).

The protein belongs to the universal ribosomal protein uL14 family. Part of the 50S ribosomal subunit. Forms a cluster with proteins L3 and L19. In the 70S ribosome, L14 and L19 interact and together make contacts with the 16S rRNA in bridges B5 and B8.

Binds to 23S rRNA. Forms part of two intersubunit bridges in the 70S ribosome. This chain is Large ribosomal subunit protein uL14, found in Lactobacillus delbrueckii subsp. bulgaricus (strain ATCC 11842 / DSM 20081 / BCRC 10696 / JCM 1002 / NBRC 13953 / NCIMB 11778 / NCTC 12712 / WDCM 00102 / Lb 14).